A 262-amino-acid polypeptide reads, in one-letter code: Acyl-[acyl-carrier-protein]--UDP-N-acetylglucosamine O-acyltransferase (262 aa).

It belongs to the transferase hexapeptide repeat family. LpxA subfamily. As to quaternary structure, homotrimer.

It is found in the cytoplasm. It carries out the reaction a (3R)-hydroxyacyl-[ACP] + UDP-N-acetyl-alpha-D-glucosamine = a UDP-3-O-[(3R)-3-hydroxyacyl]-N-acetyl-alpha-D-glucosamine + holo-[ACP]. The protein operates within glycolipid biosynthesis; lipid IV(A) biosynthesis; lipid IV(A) from (3R)-3-hydroxytetradecanoyl-[acyl-carrier-protein] and UDP-N-acetyl-alpha-D-glucosamine: step 1/6. Its function is as follows. Involved in the biosynthesis of lipid A, a phosphorylated glycolipid that anchors the lipopolysaccharide to the outer membrane of the cell. The sequence is that of Acyl-[acyl-carrier-protein]--UDP-N-acetylglucosamine O-acyltransferase from Pectobacterium carotovorum subsp. carotovorum (strain PC1).